We begin with the raw amino-acid sequence, 117 residues long: Pre-mRNA-splicing factor ini1 (117 aa).

Belongs to the PHF5 family.

It localises to the nucleus. Functionally, required for pre-mRNA splicing. This is Pre-mRNA-splicing factor ini1 (ini1) from Schizosaccharomyces pombe (strain 972 / ATCC 24843) (Fission yeast).